A 95-amino-acid chain; its full sequence is uncharacterized protein (95 aa).

In terms of domain architecture, ABM spans 2 to 92 (VREAAMLHIK…YTPFPTVEHF (91 aa)).

This is an uncharacterized protein from Bacillus subtilis (strain 168).